We begin with the raw amino-acid sequence, 781 residues long: ATP-dependent 6-phosphofructokinase (781 aa).

The segment at 1-394 (MATWMEGKYV…NLATYIKLSK (394 aa)) is N-terminal catalytic PFK domain 1. Residues glycine 27, 90-91 (RC), and 120-123 (GDGS) contribute to the ATP site. Position 121 (aspartate 121) interacts with Mg(2+). Substrate contacts are provided by residues 166 to 168 (SID), arginine 203, 210 to 212 (MGR), glutamate 266, arginine 294, and 300 to 303 (HVQR). Aspartate 168 serves as the catalytic Proton acceptor. The interdomain linker stretch occupies residues 395-409 (IEQPRQSVMSSENNL). Residues 410-781 (RIGIVNVGAP…ESIMAGTDRK (372 aa)) form a C-terminal regulatory PFK domain 2 region. Beta-D-fructose 2,6-bisphosphate contacts are provided by residues arginine 479, 537 to 541 (TISNN), arginine 575, 582 to 584 (MGG), aspartate 638, arginine 664, 670 to 673 (HMQQ), and arginine 745.

Belongs to the phosphofructokinase type A (PFKA) family. ATP-dependent PFK group I subfamily. Eukaryotic two domain clade 'E' sub-subfamily. Homotetramer. Mg(2+) is required as a cofactor.

The protein localises to the cytoplasm. It catalyses the reaction beta-D-fructose 6-phosphate + ATP = beta-D-fructose 1,6-bisphosphate + ADP + H(+). Its pathway is carbohydrate degradation; glycolysis; D-glyceraldehyde 3-phosphate and glycerone phosphate from D-glucose: step 3/4. Allosterically activated by ADP, AMP, or fructose 2,6-bisphosphate, and allosterically inhibited by ATP or citrate. Functionally, catalyzes the phosphorylation of D-fructose 6-phosphate to fructose 1,6-bisphosphate by ATP, the first committing step of glycolysis. The sequence is that of ATP-dependent 6-phosphofructokinase (PFK) from Schistosoma mansoni (Blood fluke).